The following is a 2453-amino-acid chain: Tyrosine-protein phosphatase non-receptor type 13 (2453 aa).

Positions 3-190 (VSLAEALEVR…SGTDPLSRSS (188 aa)) constitute a KIND domain. The segment at 183–227 (TDPLSRSSEQKPDRSQAIRDRLRGKGLPTGRSSTSDALDTHEAPL) is disordered. Residues 190 to 205 (SEQKPDRSQAIRDRLR) are compositionally biased toward basic and acidic residues. Residue S240 is modified to Phosphoserine. Residues 253–285 (EDYLKDTPSDNNSRHEDSETFSSPYQFKTSTPQ) form a disordered region. Positions 256 to 270 (LKDTPSDNNSRHEDS) are enriched in basic and acidic residues. Positions 272–285 (TFSSPYQFKTSTPQ) are enriched in polar residues. Phosphoserine occurs at positions 297 and 298. A disordered region spans residues 429–457 (SEASKRFESSSGLPGVDETGQTRPSRQYE). The span at 447-457 (TGQTRPSRQYE) shows a compositional bias: polar residues. The stretch at 458-493 (TSLEGNLINQDIMLRRQEEEMMQLQARMALRQSRLS) forms a coiled coil. The FERM domain maps to 565–865 (RKVNIRLLSG…SQHKFQLQMR (301 aa)). Phosphoserine is present on residues S883, S890, S901, S904, and S907. Basic and acidic residues predominate over residues 944-957 (KEKTDKASWEEKPR). 2 disordered regions span residues 944–966 (KEKT…YHDL) and 1007–1063 (LAGL…VPFK). S1021 and S1025 each carry phosphoserine. The span at 1025 to 1034 (SPERRNHESD) shows a compositional bias: basic and acidic residues. A compositionally biased stretch (low complexity) spans 1049 to 1058 (SLPSSGKSSS). Residue S1076 is modified to Phosphoserine. The region spanning 1084-1170 (LVNLKKDPKH…DVTLVISQPK (87 aa)) is the PDZ 1 domain. Disordered regions lie at residues 1199–1356 (DSAM…GDTF) and 1441–1478 (GQVP…TPHV). A Phosphoserine modification is found at S1221. 2 stretches are compositionally biased toward polar residues: residues 1242–1252 (ESASLSQSQVN) and 1267–1279 (PQHS…VTTK). At S1270 the chain carries Phosphoserine. Residues 1297–1315 (GISDLIEHLDCADSDKDDS) show a composition bias toward basic and acidic residues. Residues 1331 to 1341 (SSSLSTSNKTS) show a composition bias toward low complexity. The region spanning 1357–1442 (EVELAKTDGS…VVHLLLEKGQ (86 aa)) is the PDZ 2 domain. A compositionally biased stretch (basic and acidic residues) spans 1467–1478 (APEKVAKQTPHV). The PDZ 3 domain maps to 1491-1579 (EVKLFKNSSG…EVSLLLCRPA (89 aa)). Residues 1602–1629 (LNSSKETSQPSSSVEQGASSDDNGVSGK) show a composition bias toward polar residues. 2 disordered regions span residues 1602–1662 (LNSS…AKMP) and 1695–1726 (KLES…SDAT). Over residues 1638–1655 (SRRESYSDHSESGEDDSV) the composition is skewed to basic and acidic residues. PDZ domains follow at residues 1764-1845 (LITL…GRIL) and 1857-1942 (LPDI…TRDG). Disordered regions lie at residues 1991–2024 (EAVC…DDIY) and 2051–2139 (RHAT…DPPF). Residues 2012 to 2021 (ETKESNSRDD) are compositionally biased toward basic and acidic residues. In terms of domain architecture, Tyrosine-protein phosphatase spans 2180-2434 (PSKELENLQE…VFCYQVILYV (255 aa)). Residues D2345, 2375–2381 (CSAGIGR), and Q2419 each bind substrate. The active-site Phosphocysteine intermediate is the C2375.

The protein belongs to the protein-tyrosine phosphatase family. Non-receptor class subfamily. As to quaternary structure, interacts (via the first PDZ domain) with PLEKHA1 and PLEKHA2. Interacts (via the second PDZ domain) with TNFRSF6 (Fas receptor) (via C-terminus). Interacts (via the second PDZ domain) with TRIP6 (via the third LIM domain and C-terminus). Interacts (via the third PDZ domain) with NGFR (via C-terminal SVP motif) and PKN2 (via C-terminus). Interacts (via the second or fourth PDZ domains) with PDLIM4 (via C-terminus only or via combined C-terminus and LIM domain, but not LIM domain only). Found in a complex with PDLIM4 and TRIP6. Interacts with PDLIM4; this interaction results in dephosphorylation of SRC 'Tyr-419' by this protein leading to its inactivation. Interacts with BRD7. Interacts with RAPGEF6. Interacts with ARHGAP29. Interacts with PIK3R2; dephosphorylates PIK3R2. Interacts with FBXL2. Interacts (via the FERM domain) with ENTR1. Found in a complex with ENTR1, PTPN13 and GIT1. Expressed predominantly in kidney and, to a lesser extent, in lung, heart, brain and testis.

Its subcellular location is the cytoplasm. The protein localises to the cytoskeleton. It localises to the nucleus. It is found in the cell projection. The protein resides in the lamellipodium. It catalyses the reaction O-phospho-L-tyrosyl-[protein] + H2O = L-tyrosyl-[protein] + phosphate. In terms of biological role, tyrosine phosphatase which negatively regulates FAS-induced apoptosis and NGFR-mediated pro-apoptotic signaling. May regulate phosphoinositide 3-kinase (PI3K) signaling through dephosphorylation of PIK3R2. The chain is Tyrosine-protein phosphatase non-receptor type 13 (Ptpn13) from Mus musculus (Mouse).